The primary structure comprises 384 residues: Adaptive-response sensory kinase SasA (384 aa).

The Histidine kinase domain occupies 162 to 384; that stretch reads MLAHDLRSPL…SFHFTLPVYR (223 aa). Phosphohistidine; by autocatalysis is present on H165.

Homooligomerizes. Interacts with KaiC. Participates in the KaiABC clock complex, whose core is composed of a KaiC homohexamer, 6 KaiB and up to 6 KaiA dimers. SasA and KaiB(fs) compete to bind to KaiC.

The enzyme catalyses ATP + protein L-histidine = ADP + protein N-phospho-L-histidine.. Its function is as follows. Member of the two-component regulatory system SasA/RpaA involved in genome-wide circadian gene expression. One of several clock output pathways. Participates in the Kai clock protein complex, the main circadian regulator in cyanobacteria, via its interaction with KaiC. KaiC enhances the autophosphorylation activity of SasA, which then transfers its phosphate group to RpaA to activate it. In addition to its output function, recruits fold-shifted KaiB (KaiB(fs)) to KaiC to cooperatively form the KaiB(6):KaiC(6) complex (independent of SasA kinase activity). Required for robustness of the circadian rhythm of gene expression and is involved in clock output, also required for adaptation to light/dark cycles. The chain is Adaptive-response sensory kinase SasA from Microcystis aeruginosa (strain NIES-843 / IAM M-2473).